The following is a 309-amino-acid chain: Aspartate carbamoyltransferase catalytic subunit (309 aa).

Carbamoyl phosphate-binding residues include R55 and T56. Residue K85 coordinates L-aspartate. R106, H135, and Q138 together coordinate carbamoyl phosphate. L-aspartate contacts are provided by R168 and R230. 2 residues coordinate carbamoyl phosphate: L268 and P269.

The protein belongs to the aspartate/ornithine carbamoyltransferase superfamily. ATCase family. In terms of assembly, heterododecamer (2C3:3R2) of six catalytic PyrB chains organized as two trimers (C3), and six regulatory PyrI chains organized as three dimers (R2).

It catalyses the reaction carbamoyl phosphate + L-aspartate = N-carbamoyl-L-aspartate + phosphate + H(+). Its pathway is pyrimidine metabolism; UMP biosynthesis via de novo pathway; (S)-dihydroorotate from bicarbonate: step 2/3. Its function is as follows. Catalyzes the condensation of carbamoyl phosphate and aspartate to form carbamoyl aspartate and inorganic phosphate, the committed step in the de novo pyrimidine nucleotide biosynthesis pathway. This chain is Aspartate carbamoyltransferase catalytic subunit, found in Aliivibrio fischeri (strain MJ11) (Vibrio fischeri).